The sequence spans 195 residues: Molybdenum cofactor guanylyltransferase (195 aa).

Residues 10–12, Lys-23, Asn-51, Asp-69, and Asp-99 contribute to the GTP site; that span reads LAG. Position 99 (Asp-99) interacts with Mg(2+).

The protein belongs to the MobA family. In terms of assembly, monomer. Mg(2+) is required as a cofactor.

It localises to the cytoplasm. The enzyme catalyses Mo-molybdopterin + GTP + H(+) = Mo-molybdopterin guanine dinucleotide + diphosphate. Transfers a GMP moiety from GTP to Mo-molybdopterin (Mo-MPT) cofactor (Moco or molybdenum cofactor) to form Mo-molybdopterin guanine dinucleotide (Mo-MGD) cofactor. The chain is Molybdenum cofactor guanylyltransferase from Histophilus somni (strain 129Pt) (Haemophilus somnus).